The following is an 89-amino-acid chain: Small ribosomal subunit protein uS15 (89 aa).

Over residues 1–10 (MSITAERKAE) the composition is skewed to basic and acidic residues. Positions 1–24 (MSITAERKAEVIQGNANKAGDTGS) are disordered.

The protein belongs to the universal ribosomal protein uS15 family. As to quaternary structure, part of the 30S ribosomal subunit. Forms a bridge to the 50S subunit in the 70S ribosome, contacting the 23S rRNA.

Functionally, one of the primary rRNA binding proteins, it binds directly to 16S rRNA where it helps nucleate assembly of the platform of the 30S subunit by binding and bridging several RNA helices of the 16S rRNA. In terms of biological role, forms an intersubunit bridge (bridge B4) with the 23S rRNA of the 50S subunit in the ribosome. The chain is Small ribosomal subunit protein uS15 from Rhodopseudomonas palustris (strain HaA2).